The sequence spans 310 residues: Epoxyqueuosine reductase (310 aa).

The Proton donor role is filled by Asp-133. The 4Fe-4S ferredoxin-type domain occupies 179–208; that stretch reads YDNPSDKDYCGTCTRCVDACPTDAILQDNL. Residues Cys-188, Cys-191, Cys-194, Cys-198, Cys-214, Cys-241, Cys-244, and Cys-248 each coordinate [4Fe-4S] cluster.

The protein belongs to the QueG family. Monomer. The cofactor is cob(II)alamin. [4Fe-4S] cluster serves as cofactor.

Its subcellular location is the cytoplasm. It carries out the reaction epoxyqueuosine(34) in tRNA + AH2 = queuosine(34) in tRNA + A + H2O. Its pathway is tRNA modification; tRNA-queuosine biosynthesis. Its function is as follows. Catalyzes the conversion of epoxyqueuosine (oQ) to queuosine (Q), which is a hypermodified base found in the wobble positions of tRNA(Asp), tRNA(Asn), tRNA(His) and tRNA(Tyr). In Cyclobacterium marinum (strain ATCC 25205 / DSM 745 / LMG 13164 / NCIMB 1802) (Flectobacillus marinus), this protein is Epoxyqueuosine reductase.